The primary structure comprises 415 residues: Probable glucuronosyltransferase Os01g0926600 (415 aa).

The Cytoplasmic portion of the chain corresponds to 1-4; it reads MAMR. Residues 5 to 25 traverse the membrane as a helical; Signal-anchor for type II membrane protein segment; the sequence is LSSAAVALALLLAATALEDVA. Residues 26–415 are Lumenal-facing; sequence RGQDTERIEG…QGPVGDLKPW (390 aa). 2 N-linked (GlcNAc...) asparagine glycosylation sites follow: Asn142 and Asn403.

It belongs to the glycosyltransferase 47 family.

The protein resides in the golgi apparatus membrane. Its function is as follows. Involved in the synthesis of glucuronoxylan hemicellulose in secondary cell walls. This Oryza sativa subsp. japonica (Rice) protein is Probable glucuronosyltransferase Os01g0926600.